The primary structure comprises 284 residues: Large ribosomal subunit protein uL2 (284 aa).

Positions 232-284 (RGTAMNPVDHPHGGGEGRHNGYIPRTPWGKVTKGLKTRDKRKSNKWIVKDRRK) are disordered. Over residues 240–250 (DHPHGGGEGRH) the composition is skewed to basic and acidic residues. Residues 264-284 (KGLKTRDKRKSNKWIVKDRRK) are compositionally biased toward basic residues.

It belongs to the universal ribosomal protein uL2 family. Part of the 50S ribosomal subunit. Forms a bridge to the 30S subunit in the 70S ribosome.

Functionally, one of the primary rRNA binding proteins. Required for association of the 30S and 50S subunits to form the 70S ribosome, for tRNA binding and peptide bond formation. It has been suggested to have peptidyltransferase activity; this is somewhat controversial. Makes several contacts with the 16S rRNA in the 70S ribosome. The polypeptide is Large ribosomal subunit protein uL2 (Chlamydia abortus (strain DSM 27085 / S26/3) (Chlamydophila abortus)).